A 123-amino-acid chain; its full sequence is Putative acidic leucine-rich nuclear phosphoprotein 32 family member C (123 aa).

LRR repeat units follow at residues Glu-43–Asn-64, Lys-65–Cys-87, Asn-89–Lys-110, and Asn-114–Cys-123.

The protein belongs to the ANP32 family.

The polypeptide is Putative acidic leucine-rich nuclear phosphoprotein 32 family member C (Anp32c) (Mus musculus (Mouse)).